The sequence spans 1023 residues: GATOR2 complex protein WDR24 (1023 aa).

WD repeat units follow at residues 16 to 54 (NLGS…FKVT), 64 to 108 (SLNY…SKSV), 114 to 154 (DHSR…NASK), 159 to 199 (PKSE…IAVE), 203 to 243 (SHQG…SLNN), 245 to 287 (STIS…IPLF), and 291 to 329 (DHRD…KPYQ). Over residues 563–578 (SKNIIDNSNDSNQEIN) the composition is skewed to low complexity. Disordered stretches follow at residues 563–621 (SKNI…EPPS) and 661–824 (QKST…SIEN). Over residues 584-593 (KEDEEEDDDN) the composition is skewed to acidic residues. Residues 661–681 (QKSTDNISDNNSNVHVNIKRQ) are compositionally biased toward polar residues. Residues 682–695 (NQPTNNNNNNSNID) show a composition bias toward low complexity. Positions 696–742 (NLEKKSNKSKSTKENKESSLTDQNKQKRNDNKEKIDNNEIDNDNKDN) are enriched in basic and acidic residues. The segment covering 743-759 (NDDDDNDVDNIGEDNDE) has biased composition (acidic residues). Over residues 760–812 (INNNNDNNNNNNNNNNNNNNNNNNNNNNNNNNNNNNNNKNNNNDNNNNNNINN) the composition is skewed to low complexity. The C4-type zinc finger occupies 947 to 969 (ACSSCGKSIPQNSIICEKCNKAS). Positions 948, 951, 962, 965, 972, 975, 986, 989, 991, 994, 997, 1010, 1014, 1016, and 1018 each coordinate Zn(2+). An RING-type; atypical zinc finger spans residues 970–1021 (SKCSICRLPVKGMWVWCQGCGHGGHLEHMKSWFIDKNQKSCPTGCTHICTPF).

It belongs to the WD repeat WDR24 family. As to quaternary structure, probably part of the GATOR complex.

The protein resides in the lysosome membrane. The enzyme catalyses S-ubiquitinyl-[E2 ubiquitin-conjugating enzyme]-L-cysteine + [acceptor protein]-L-lysine = [E2 ubiquitin-conjugating enzyme]-L-cysteine + N(6)-ubiquitinyl-[acceptor protein]-L-lysine.. It functions in the pathway protein modification; protein ubiquitination. Functionally, as a component of the GATOR complex may function in the amino acid-sensing branch of the TORC1 signaling pathway. In Dictyostelium discoideum (Social amoeba), this protein is GATOR2 complex protein WDR24.